Reading from the N-terminus, the 1342-residue chain is DNA-directed RNA polymerase subunit beta (1342 aa).

It belongs to the RNA polymerase beta chain family. The RNAP catalytic core consists of 2 alpha, 1 beta, 1 beta' and 1 omega subunit. When a sigma factor is associated with the core the holoenzyme is formed, which can initiate transcription.

It catalyses the reaction RNA(n) + a ribonucleoside 5'-triphosphate = RNA(n+1) + diphosphate. Functionally, DNA-dependent RNA polymerase catalyzes the transcription of DNA into RNA using the four ribonucleoside triphosphates as substrates. This is DNA-directed RNA polymerase subunit beta from Vibrio campbellii (strain ATCC BAA-1116).